We begin with the raw amino-acid sequence, 683 residues long: THO complex subunit 5 homolog (683 aa).

The segment at 1–42 is disordered; sequence MSSESSKKRKPKVIRSDGTPTEGKRNRSDTEQEGKYYSEEAE. Serine 2 is subject to N-acetylserine. The tract at residues 2-144 is interaction with CSF1R; that stretch reads SSESSKKRKP…YEVMHLQKEI (143 aa). The tract at residues 2-199 is interaction with THOC7; the sequence is SSESSKKRKP…RLDWELEQRK (198 aa). Serine 5 and serine 6 each carry phosphoserine. The short motif at 7–10 is the Nuclear localization signal element; the sequence is KKRK. The segment covering 22–42 has biased composition (basic and acidic residues); the sequence is EGKRNRSDTEQEGKYYSEEAE. The stretch at 81–247 forms a coiled coil; it reads AIEIEERRIQ…QASLPVQEYL (167 aa). Residue lysine 153 forms a Glycyl lysine isopeptide (Lys-Gly) (interchain with G-Cter in SUMO2) linkage. Residue tyrosine 225 is modified to Phosphotyrosine. The segment at 247 to 683 is tandem RWD domains; it reads LFMPFDQAHK…NHPQGFFSHR (437 aa). Positions 301-336 are disordered; sequence FKPPEDSQDDESDSDAEEEQTTKRRRPTLGVQLDDK. Positions 306 to 319 are enriched in acidic residues; that stretch reads DSQDDESDSDAEEE. A phosphoserine mark is found at serine 307, serine 312, and serine 314. A Phosphothreonine modification is found at threonine 328.

This sequence belongs to the THOC5 family. In terms of assembly, component of the THO subcomplex, which is composed of THOC1, THOC2, THOC3, THOC5, THOC6 and THOC7. The THO subcomplex interacts with DDX39B to form the THO-DDX39B complex which multimerizes into a 28-subunit tetrameric assembly. Component of the transcription/export (TREX) complex at least composed of ALYREF/THOC4, DDX39B, SARNP/CIP29, CHTOP and the THO subcomplex; in the complex interacts with THOC1, THOC2, THOC5, THOC6 and THOC7; forms a coiled-coil dimer with THOC7; together with THOC6 and THOC7, plays a key structural role in the oligomerization of the THO-DDX39B complex. TREX seems to have a dynamic structure involving ATP-dependent remodeling. Interacts (via N-terminus) with the NTF2 domain of NXF1. Interacts with phosphorylated CSF1R. Forms a complex with CEBPB. Interacts with CPSF6; indicative for an association with the cleavage factor Im (CFIm) complex. Interacts with THOC1. Interacts with LUZP4. Interacts with NCBP3. Phosphorylated on tyrosine upon binding to activated CSF1R; which causes a dissociation of the two proteins. Phosphorylation on Ser-5 and/or Ser-6 is required for nuclear export. Phosphorylated on Thr-328 in insulin-stimulated adipocytes. In terms of tissue distribution, ubiquitously expressed, with highest levels in testis, liver and heart.

The protein resides in the nucleus. The protein localises to the cytoplasm. Functionally, component of the THO subcomplex of the TREX complex which is thought to couple mRNA transcription, processing and nuclear export, and which specifically associates with spliced mRNA and not with unspliced pre-mRNA. Plays a key structural role in the oligomerization of the THO-DDX39B complex. TREX is recruited to spliced mRNAs by a transcription-independent mechanism, binds to mRNA upstream of the exon-junction complex (EJC) and is recruited in a splicing- and cap-dependent manner to a region near the 5' end of the mRNA where it functions in mRNA export to the cytoplasm via the TAP/NXF1 pathway. THOC5 in conjunction with ALYREF/THOC4 functions in NXF1-NXT1 mediated nuclear export of HSP70 mRNA; both proteins enhance the RNA binding activity of NXF1 and are required for NXF1 localization to the nuclear rim. Involved in transcription elongation and genome stability. Involved in alternative polyadenylation site choice by recruiting CPSF6 to 5' region of target genes; probably mediates association of the TREX and CFIm complexes. Its function is as follows. Regulates the expression of myeloid transcription factors CEBPA, CEBPB and GAB2 by enhancing the levels of phosphatidylinositol 3,4,5-trisphosphate. May be involved in the differentiation of granulocytes and adipocytes. Essential for hematopoietic primitive cell survival and plays an integral role in monocytic development. The sequence is that of THO complex subunit 5 homolog (Thoc5) from Mus musculus (Mouse).